The primary structure comprises 220 residues: 2-hydroxy-3-keto-5-methylthiopentenyl-1-phosphate phosphatase (220 aa).

It belongs to the HAD-like hydrolase superfamily. MtnX family.

It carries out the reaction 2-hydroxy-5-methylsulfanyl-3-oxopent-1-enyl phosphate + H2O = 1,2-dihydroxy-5-(methylsulfanyl)pent-1-en-3-one + phosphate. It participates in amino-acid biosynthesis; L-methionine biosynthesis via salvage pathway; L-methionine from S-methyl-5-thio-alpha-D-ribose 1-phosphate: step 4/6. In terms of biological role, dephosphorylates 2-hydroxy-3-keto-5-methylthiopentenyl-1-phosphate (HK-MTPenyl-1-P) yielding 1,2-dihydroxy-3-keto-5-methylthiopentene (DHK-MTPene). This chain is 2-hydroxy-3-keto-5-methylthiopentenyl-1-phosphate phosphatase, found in Geobacillus thermodenitrificans (strain NG80-2).